Consider the following 150-residue polypeptide: Large ribosomal subunit protein uL11 (150 aa).

The protein belongs to the universal ribosomal protein uL11 family. In terms of assembly, part of the ribosomal stalk of the 50S ribosomal subunit. Interacts with L10 and the large rRNA to form the base of the stalk. L10 forms an elongated spine to which L12 dimers bind in a sequential fashion forming a multimeric L10(L12)X complex. In terms of processing, one or more lysine residues are methylated.

Forms part of the ribosomal stalk which helps the ribosome interact with GTP-bound translation factors. In Azobacteroides pseudotrichonymphae genomovar. CFP2, this protein is Large ribosomal subunit protein uL11.